The chain runs to 169 residues: Small ribosomal subunit protein uS5 (169 aa).

In terms of domain architecture, S5 DRBM spans 14–77; sequence LQEKVVEVRR…EDAKKNLIVV (64 aa).

Belongs to the universal ribosomal protein uS5 family. Part of the 30S ribosomal subunit. Contacts proteins S4 and S8.

In terms of biological role, with S4 and S12 plays an important role in translational accuracy. Located at the back of the 30S subunit body where it stabilizes the conformation of the head with respect to the body. In Clostridioides difficile (strain 630) (Peptoclostridium difficile), this protein is Small ribosomal subunit protein uS5.